The sequence spans 37 residues: Photosystem II reaction center protein Psb30 (37 aa).

The chain crosses the membrane as a helical span at residues 10 to 30 (LISLLLLTLIMLAGPAVIALW).

This sequence belongs to the Psb30/Ycf12 family. As to quaternary structure, PSII is composed of 1 copy each of membrane proteins PsbA, PsbB, PsbC, PsbD, PsbE, PsbF, PsbH, PsbI, PsbJ, PsbK, PsbL, PsbM, PsbT, PsbX, Psb30/Ycf12, peripheral proteins PsbO, CyanoQ (PsbQ), PsbU, PsbV and a large number of cofactors. It forms dimeric complexes.

It localises to the cell inner membrane. Functionally, a core subunit of photosystem II (PSII), probably helps stabilize the reaction center. The polypeptide is Photosystem II reaction center protein Psb30 (Gloeobacter violaceus (strain ATCC 29082 / PCC 7421)).